Reading from the N-terminus, the 1018-residue chain is Putative type I restriction enzyme MjaVIIIP endonuclease subunit (1018 aa).

Belongs to the HsdR family. As to quaternary structure, the type I restriction/modification system is composed of three polypeptides R, M and S.

The enzyme catalyses Endonucleolytic cleavage of DNA to give random double-stranded fragments with terminal 5'-phosphates, ATP is simultaneously hydrolyzed.. Functionally, the restriction (R) subunit of a type I restriction enzyme that recognizes 5'-GAYN(5)GTAA-3' and cleaves a random distance away. The R subunit is required for both endonuclease and ATPase activities but not for modification. After locating a non-methylated recognition site, the enzyme complex serves as a molecular motor that translocates DNA in an ATP-dependent manner until a collision occurs that triggers cleavage. The polypeptide is Putative type I restriction enzyme MjaVIIIP endonuclease subunit (Methanocaldococcus jannaschii (strain ATCC 43067 / DSM 2661 / JAL-1 / JCM 10045 / NBRC 100440) (Methanococcus jannaschii)).